A 648-amino-acid polypeptide reads, in one-letter code: Transcription initiation factor TFIID subunit 5 (648 aa).

Residues 1-13 show a composition bias toward low complexity; the sequence is MDSENSSSHSISS. Positions 1–21 are disordered; that stretch reads MDSENSSSHSISSPQMFQNTH. One can recognise a LisH domain in the interval 35–67; sequence MNNESLQMIIGYLRRNGLTETEELLTREAGPVL. WD repeat units lie at residues 317-358, 392-431, 433-472, 475-514, 517-556, and 560-599; these read NAPI…KKLR, GHGGPVFSVNFSPDRRLLISSAGDRTVRLWSMETQRNAVI, RTPAVVWQAQFCSRGYYFATASADKTAAMWSTDRMHPLRI, DPYGDVGCIDYHPNCNYIAGGSDDRYVRVWDVCSGTRVRI, GHKASIIAVKFSPCGRYIVSLDAIGNLMIWDLAYQRLVAA, and EQAGTKGSITFSRDGGVFAVSHGNSSIQLYSLDTLIGTVL.

The protein belongs to the WD repeat TAF5 family. As to quaternary structure, component of the TFIID basal transcription factor complex, composed of TATA-box-binding protein tbp-1, and a number of TBP-associated factors (TAFs).

The protein resides in the nucleus. Functionally, the TFIID basal transcription factor complex plays a major role in the initiation of RNA polymerase II (Pol II)-dependent transcription. TFIID recognizes and binds promoters via its subunit tbp-1, a TATA-box-binding protein, and promotes assembly of the pre-initiation complex (PIC). The TFIID complex consists of tbp-1 and TBP-associated factors (TAFs), including taf-5. Essential for early embryonic development, but not required for transcription of some genes; probably acts via activating transcription initiation by RNA Pol II, as part of the TFIID complex. This is Transcription initiation factor TFIID subunit 5 from Caenorhabditis elegans.